Consider the following 194-residue polypeptide: Adenylate kinase isoenzyme 1 (194 aa).

Met1 carries the N-acetylmethionine modification. 18 to 23 (GSGKGT) is an ATP binding site. Residue Ser38 is modified to Phosphoserine. Residues 38–67 (STGDLLRAEVSSGSSRGKMLSSIMEKGELV) are NMP. AMP is bound by residues Thr39, Arg44, 65 to 67 (ELV), 94 to 97 (GYPR), and Gln101. An LID region spans residues 131 to 141 (KRGETSGRVDD). Arg132 serves as a coordination point for ATP. The AMP site is built by Arg138 and Arg149. Gly177 contacts ATP.

It belongs to the adenylate kinase family. AK1 subfamily. In terms of assembly, monomer. Requires Mg(2+) as cofactor.

It localises to the cytoplasm. The enzyme catalyses a ribonucleoside 5'-phosphate + ATP = a ribonucleoside 5'-diphosphate + ADP. It carries out the reaction AMP + ATP = 2 ADP. It catalyses the reaction dAMP + ATP = dADP + ADP. The catalysed reaction is dATP + AMP = dADP + ADP. The enzyme catalyses dAMP + dATP = 2 dADP. It carries out the reaction a 2'-deoxyribonucleoside 5'-diphosphate + ATP = a 2'-deoxyribonucleoside 5'-triphosphate + ADP. It catalyses the reaction a ribonucleoside 5'-diphosphate + ATP = a ribonucleoside 5'-triphosphate + ADP. The catalysed reaction is CDP + GTP = CTP + GDP. The enzyme catalyses GDP + ATP = GTP + ADP. It carries out the reaction UDP + ATP = UTP + ADP. It catalyses the reaction GTP + UDP = UTP + GDP. The catalysed reaction is dTDP + GTP = dTTP + GDP. The enzyme catalyses dCDP + GTP = dCTP + GDP. It carries out the reaction dGDP + ATP = dGTP + ADP. It catalyses the reaction dADP + GTP = dATP + GDP. The catalysed reaction is thiamine diphosphate + ADP = thiamine triphosphate + AMP. Catalyzes the reversible transfer of the terminal phosphate group between ATP and AMP. Also displays broad nucleoside diphosphate kinase activity. Plays an important role in cellular energy homeostasis and in adenine nucleotide metabolism. Also catalyzes at a very low rate the synthesis of thiamine triphosphate (ThTP) from thiamine diphosphate (ThDP) and ADP. The chain is Adenylate kinase isoenzyme 1 (Ak1) from Rattus norvegicus (Rat).